Consider the following 301-residue polypeptide: Probable alpha-L-glutamate ligase (301 aa).

The region spanning 104 to 287 (LQLLSRKGIG…IAGMIIEYIE (184 aa)) is the ATP-grasp domain. Residues Lys141, 178-179 (EY), Asp187, and 211-213 (RSN) each bind ATP. 3 residues coordinate Mg(2+): Asp248, Glu260, and Asn262. 3 residues coordinate Mn(2+): Asp248, Glu260, and Asn262.

The protein belongs to the RimK family. The cofactor is Mg(2+). It depends on Mn(2+) as a cofactor.

The polypeptide is Probable alpha-L-glutamate ligase (Methanococcoides burtonii (strain DSM 6242 / NBRC 107633 / OCM 468 / ACE-M)).